The sequence spans 280 residues: Ribosomal RNA small subunit methyltransferase I (280 aa).

It belongs to the methyltransferase superfamily. RsmI family.

The protein resides in the cytoplasm. It catalyses the reaction cytidine(1402) in 16S rRNA + S-adenosyl-L-methionine = 2'-O-methylcytidine(1402) in 16S rRNA + S-adenosyl-L-homocysteine + H(+). Its function is as follows. Catalyzes the 2'-O-methylation of the ribose of cytidine 1402 (C1402) in 16S rRNA. This Rickettsia prowazekii (strain Madrid E) protein is Ribosomal RNA small subunit methyltransferase I.